The following is a 571-amino-acid chain: Proline--tRNA ligase (571 aa).

Belongs to the class-II aminoacyl-tRNA synthetase family. ProS type 1 subfamily. In terms of assembly, homodimer.

The protein localises to the cytoplasm. The enzyme catalyses tRNA(Pro) + L-proline + ATP = L-prolyl-tRNA(Pro) + AMP + diphosphate. Catalyzes the attachment of proline to tRNA(Pro) in a two-step reaction: proline is first activated by ATP to form Pro-AMP and then transferred to the acceptor end of tRNA(Pro). As ProRS can inadvertently accommodate and process non-cognate amino acids such as alanine and cysteine, to avoid such errors it has two additional distinct editing activities against alanine. One activity is designated as 'pretransfer' editing and involves the tRNA(Pro)-independent hydrolysis of activated Ala-AMP. The other activity is designated 'posttransfer' editing and involves deacylation of mischarged Ala-tRNA(Pro). The misacylated Cys-tRNA(Pro) is not edited by ProRS. The protein is Proline--tRNA ligase of Pseudomonas putida (strain GB-1).